The sequence spans 204 residues: Photosynthetic NDH subunit of subcomplex B 3, chloroplastic (204 aa).

2 disordered regions span residues 1–24 (MGSV…FSHK) and 45–68 (KTVR…DEPP). Residues 1-48 (MGSVQLSGSGLVASLPPNHSFSHKTKLNKPNSYFFRSKHNAARTKTVR) constitute a chloroplast transit peptide. Residues 76–180 (HSVLLPDGTP…STGLVVIQQL (105 aa)) form the 2Fe-2S ferredoxin-type domain. Positions 120, 126, 129, and 162 each coordinate [2Fe-2S] cluster.

In terms of assembly, part of the chloroplast NDH complex, composed of a mixture of chloroplast and nucleus encoded subunits. Component of the NDH subcomplex B, at least composed of PnsB1, PnsB2, PnsB3, PnsB4 and PnsB5.

It localises to the plastid. The protein resides in the chloroplast thylakoid membrane. In terms of biological role, NDH shuttles electrons from NAD(P)H:plastoquinone, via FMN and iron-sulfur (Fe-S) centers, to quinones in the photosynthetic chain and possibly in a chloroplast respiratory chain. The immediate electron acceptor for the enzyme in this species is believed to be plastoquinone. Couples the redox reaction to proton translocation, and thus conserves the redox energy in a proton gradient. This Arabidopsis thaliana (Mouse-ear cress) protein is Photosynthetic NDH subunit of subcomplex B 3, chloroplastic.